A 212-amino-acid chain; its full sequence is Thiamine-phosphate synthase (212 aa).

4-amino-2-methyl-5-(diphosphooxymethyl)pyrimidine-binding positions include 39 to 43 (QLREK) and N71. Mg(2+)-binding residues include D72 and D91. 4-amino-2-methyl-5-(diphosphooxymethyl)pyrimidine is bound at residue S110. 137-139 (TPT) is a 2-[(2R,5Z)-2-carboxy-4-methylthiazol-5(2H)-ylidene]ethyl phosphate binding site. K140 provides a ligand contact to 4-amino-2-methyl-5-(diphosphooxymethyl)pyrimidine. A 2-[(2R,5Z)-2-carboxy-4-methylthiazol-5(2H)-ylidene]ethyl phosphate-binding site is contributed by G168.

It belongs to the thiamine-phosphate synthase family. Mg(2+) serves as cofactor.

It catalyses the reaction 2-[(2R,5Z)-2-carboxy-4-methylthiazol-5(2H)-ylidene]ethyl phosphate + 4-amino-2-methyl-5-(diphosphooxymethyl)pyrimidine + 2 H(+) = thiamine phosphate + CO2 + diphosphate. The catalysed reaction is 2-(2-carboxy-4-methylthiazol-5-yl)ethyl phosphate + 4-amino-2-methyl-5-(diphosphooxymethyl)pyrimidine + 2 H(+) = thiamine phosphate + CO2 + diphosphate. It carries out the reaction 4-methyl-5-(2-phosphooxyethyl)-thiazole + 4-amino-2-methyl-5-(diphosphooxymethyl)pyrimidine + H(+) = thiamine phosphate + diphosphate. The protein operates within cofactor biosynthesis; thiamine diphosphate biosynthesis; thiamine phosphate from 4-amino-2-methyl-5-diphosphomethylpyrimidine and 4-methyl-5-(2-phosphoethyl)-thiazole: step 1/1. Condenses 4-methyl-5-(beta-hydroxyethyl)thiazole monophosphate (THZ-P) and 2-methyl-4-amino-5-hydroxymethyl pyrimidine pyrophosphate (HMP-PP) to form thiamine monophosphate (TMP). The protein is Thiamine-phosphate synthase of Acidothermus cellulolyticus (strain ATCC 43068 / DSM 8971 / 11B).